The primary structure comprises 152 residues: Smith-Magenis syndrome chromosomal region candidate gene 5 protein homolog (152 aa).

The tract at residues threonine 41 to serine 77 is disordered. Positions glutamine 49–alanine 62 are enriched in pro residues.

The polypeptide is Smith-Magenis syndrome chromosomal region candidate gene 5 protein homolog (SMCR5) (Macaca fascicularis (Crab-eating macaque)).